Here is a 288-residue protein sequence, read N- to C-terminus: uncharacterized protein (288 aa).

An HTH lysR-type domain is found at 1-59 (MDKLNAISIFCKVIETQSFTLAAKQQNISVAMASKLVSQLEEHLKTRLLQRTTRKIMPT). Residues 19 to 38 (FTLAAKQQNISVAMASKLVS) constitute a DNA-binding region (H-T-H motif).

It belongs to the LysR transcriptional regulatory family.

This is an uncharacterized protein from Haemophilus influenzae (strain ATCC 51907 / DSM 11121 / KW20 / Rd).